Consider the following 74-residue polypeptide: U5-theraphotoxin-Cg1a (74 aa).

An N-terminal signal peptide occupies residues 1–19 (MNATIFALLLLLNLAMYNA). A propeptide spanning residues 20–39 (AEQSSETDMDDTLLIPENYR) is cleaved from the precursor. Disulfide bonds link Cys-42–Cys-56, Cys-49–Cys-61, and Cys-55–Cys-71.

The protein belongs to the neurotoxin 36 family. 01 subfamily. Expressed by the venom gland.

It is found in the secreted. Probable ion channel inhibitor. The sequence is that of U5-theraphotoxin-Cg1a from Chilobrachys guangxiensis (Chinese earth tiger tarantula).